Reading from the N-terminus, the 422-residue chain is MAATATMAMPLANRLRCKPNTNSSSPSRTLFGRRVTMISSSRWMCRGSAVSGSAIMSAAADDVAAVRREEDEEMRSYLSPEKLEVLTQMEPWVEEHVLPLLKPVEAAWQPSDLLPDPAVLGGEGFHAACAELRERAAGVPDLLLVCLVANMVTEEALPTYQSSLNRVRAVGDLTGADATAWARWIRGWSAEENRHGDVLNRYMYLSGRFDMAEVERAVHRLIRSGMAVDPPCSPYHAFVYTAFQERATAVAHGNTARLVGARGHGDAALARVCGTVAADEKRHEAAYTRIVSRLLEADPDAGVRAVARMLRRGVAMPTSPISDGRRDDLYACVVSLAEQAGTYTVSDYCSIVEHLVWEWRVEELAAGLSGEGRRARDYVCELPQKIRRMKEKAHERAVKAQKKPISIPINWIFDRHVSVMLP.

Residues 1–46 constitute a chloroplast transit peptide; sequence MAATATMAMPLANRLRCKPNTNSSSPSRTLFGRRVTMISSSRWMCR. Positions 154, 192, 195, 245, 280, and 283 each coordinate Fe cation.

Belongs to the fatty acid desaturase type 2 family. Homodimer. Fe(2+) is required as a cofactor.

The protein resides in the plastid. Its subcellular location is the chloroplast. Its pathway is lipid metabolism; fatty acid metabolism. Introduces a cis double bond in the acyl chain of an acyl-[acyl-carrier protein]. This is Acyl-[acyl-carrier-protein] desaturase 6, chloroplastic from Oryza sativa subsp. indica (Rice).